Reading from the N-terminus, the 654-residue chain is Pyoverdine export ATP-binding/permease protein PvdT (654 aa).

An ABC transporter domain is found at 6–245; the sequence is IELCDIRKAY…AHKGIQAEEL (240 aa). 43–50 contacts ATP; sequence GASGSGKS. 4 helical membrane-spanning segments follow: residues 282-302, 529-549, 584-604, and 614-634; these read ALTL…LAVG, LSLM…IGVM, AIML…VVGA, and AFAL…GVVF.

The protein belongs to the ABC transporter superfamily. Macrolide exporter (TC 3.A.1.122) family. Part of the tripartite efflux system PvdRT-OpmQ, which is composed of an inner membrane component with both ATPase and permease domains, PvdT, a periplasmic membrane fusion protein, PvdR, and an outer membrane component, OpmQ.

It is found in the cell inner membrane. Its activity is regulated as follows. Has a basal ATPase activity that is stimulated by PvdR. In vitro, interaction with PVD influences the affinity of PvdT to PvdR. In terms of biological role, part of the tripartite efflux system PvdRT-OpmQ required for the secretion into the extracellular milieu of the siderophore pyoverdine (PVD), which is involved in iron acquisition. This subunit binds PVD and drives its secretion by hydrolyzing ATP. The system is responsible for export of newly synthesized PVD after the final steps of biosynthesis have taken place in the periplasm. It is also responsible for recycling of PVD after internalization of ferri-PVD into the periplasm by the outer-membrane receptor FpvA and release of iron from PVD, thus making PVD available for new cycles of iron uptake. Contributes to resistance against ampicillin. This chain is Pyoverdine export ATP-binding/permease protein PvdT, found in Pseudomonas putida (strain ATCC 47054 / DSM 6125 / CFBP 8728 / NCIMB 11950 / KT2440).